The chain runs to 403 residues: Poly(rC)-binding protein 4 (403 aa).

KH domains are found at residues 17–67 (TLTL…TITG), 101–154 (PVTL…TVSG), and 241–293 (TSSQ…TITG).

It is found in the cytoplasm. Single-stranded nucleic acid binding protein that binds preferentially to oligo dC. The chain is Poly(rC)-binding protein 4 (PCBP4) from Homo sapiens (Human).